A 282-amino-acid chain; its full sequence is Probable endonuclease 4 (282 aa).

Histidine 69, histidine 109, glutamate 144, aspartate 178, histidine 181, histidine 215, aspartate 228, histidine 230, and glutamate 260 together coordinate Zn(2+).

Belongs to the AP endonuclease 2 family. Zn(2+) is required as a cofactor.

It carries out the reaction Endonucleolytic cleavage to 5'-phosphooligonucleotide end-products.. Its function is as follows. Endonuclease IV plays a role in DNA repair. It cleaves phosphodiester bonds at apurinic or apyrimidinic (AP) sites, generating a 3'-hydroxyl group and a 5'-terminal sugar phosphate. In Thermosipho africanus (strain TCF52B), this protein is Probable endonuclease 4.